The following is a 218-amino-acid chain: Molybdenum cofactor guanylyltransferase (218 aa).

GTP contacts are provided by residues 16-18 (LAG), lysine 28, asparagine 56, aspartate 74, and aspartate 109. Mg(2+) is bound at residue aspartate 109.

This sequence belongs to the MobA family. Monomer. The cofactor is Mg(2+).

Its subcellular location is the cytoplasm. It catalyses the reaction Mo-molybdopterin + GTP + H(+) = Mo-molybdopterin guanine dinucleotide + diphosphate. Transfers a GMP moiety from GTP to Mo-molybdopterin (Mo-MPT) cofactor (Moco or molybdenum cofactor) to form Mo-molybdopterin guanine dinucleotide (Mo-MGD) cofactor. This Sinorhizobium fredii (strain NBRC 101917 / NGR234) protein is Molybdenum cofactor guanylyltransferase.